Here is a 177-residue protein sequence, read N- to C-terminus: MSDLTTIARPYAKAAFDFALEKDQLDQWGQMLSFAAEVAKNEQMNELLTGSVSADKMAEIFVAVCGEQVDTHGQNLLKVMAENGRLAALPDVCTEFYTLKKEHEKEIDVEVISATELSDEQLANIGSKLEKRLERKVKLNCSVDETLLGGVIIRAGDLVIDDSARGRLNRLSDALQS.

The protein belongs to the ATPase delta chain family. F-type ATPases have 2 components, F(1) - the catalytic core - and F(0) - the membrane proton channel. F(1) has five subunits: alpha(3), beta(3), gamma(1), delta(1), epsilon(1). F(0) has three main subunits: a(1), b(2) and c(10-14). The alpha and beta chains form an alternating ring which encloses part of the gamma chain. F(1) is attached to F(0) by a central stalk formed by the gamma and epsilon chains, while a peripheral stalk is formed by the delta and b chains.

The protein resides in the cell inner membrane. F(1)F(0) ATP synthase produces ATP from ADP in the presence of a proton or sodium gradient. F-type ATPases consist of two structural domains, F(1) containing the extramembraneous catalytic core and F(0) containing the membrane proton channel, linked together by a central stalk and a peripheral stalk. During catalysis, ATP synthesis in the catalytic domain of F(1) is coupled via a rotary mechanism of the central stalk subunits to proton translocation. In terms of biological role, this protein is part of the stalk that links CF(0) to CF(1). It either transmits conformational changes from CF(0) to CF(1) or is implicated in proton conduction. The protein is ATP synthase subunit delta of Vibrio alginolyticus.